The following is a 637-amino-acid chain: DNA mismatch repair protein MutL (637 aa).

Polar residues predominate over residues 353–371 (GQGQRPVSSASMPSASRQA). Positions 353 to 444 (GQGQRPVSSA…SEAASETPHD (92 aa)) are disordered. Over residues 378–389 (DWIKEGVQDWDW) the composition is skewed to basic and acidic residues. Over residues 396–406 (PQNPPQNPPPG) the composition is skewed to pro residues. The span at 430–444 (SGKELSEAASETPHD) shows a compositional bias: basic and acidic residues.

It belongs to the DNA mismatch repair MutL/HexB family.

This protein is involved in the repair of mismatches in DNA. It is required for dam-dependent methyl-directed DNA mismatch repair. May act as a 'molecular matchmaker', a protein that promotes the formation of a stable complex between two or more DNA-binding proteins in an ATP-dependent manner without itself being part of a final effector complex. This Beijerinckia indica subsp. indica (strain ATCC 9039 / DSM 1715 / NCIMB 8712) protein is DNA mismatch repair protein MutL.